The sequence spans 374 residues: Type IV pilus assembly protein PilC (374 aa).

3 consecutive transmembrane segments (helical) span residues 138–158, 187–207, and 347–367; these read AMTYPIAVIIVALIVSAILLI, EFLQEWWLAVIVGVGAIGFTF, and IMAVLGVLVGGLIVAMYLPIF.

This sequence belongs to the GSP F family. Homotetramer. Interacts with PilB.

The protein resides in the cell inner membrane. Its function is as follows. Essential inner membrane component of the type IV pilus (T4P) that plays a role in surface and host cell adhesion, colonization, biofilm maturation, virulence, and twitching, a form of surface-associated motility facilitated by cycles of extension, adhesion, and retraction of T4P fibers. Controls both pilus assembly and disassembly and plays an important role in PilB localization to the complex and ATPase activity. This Pseudomonas aeruginosa (strain ATCC 15692 / DSM 22644 / CIP 104116 / JCM 14847 / LMG 12228 / 1C / PRS 101 / PAO1) protein is Type IV pilus assembly protein PilC (pilC).